The following is a 372-amino-acid chain: Putative 8-amino-7-oxononanoate synthase (372 aa).

R20 contacts substrate. A pyridoxal 5'-phosphate-binding site is contributed by 94-95 (GY). Substrate is bound at residue H119. Pyridoxal 5'-phosphate contacts are provided by residues S167, 192–195 (DDAH), and 223–226 (TLSK). K226 bears the N6-(pyridoxal phosphate)lysine mark. T337 serves as a coordination point for substrate.

This sequence belongs to the class-II pyridoxal-phosphate-dependent aminotransferase family. BioF subfamily. As to quaternary structure, homodimer. Pyridoxal 5'-phosphate serves as cofactor.

It carries out the reaction 6-carboxyhexanoyl-[ACP] + L-alanine + H(+) = (8S)-8-amino-7-oxononanoate + holo-[ACP] + CO2. It functions in the pathway cofactor biosynthesis; biotin biosynthesis. Its function is as follows. Catalyzes the decarboxylative condensation of pimeloyl-[acyl-carrier protein] and L-alanine to produce 8-amino-7-oxononanoate (AON), [acyl-carrier protein], and carbon dioxide. The chain is Putative 8-amino-7-oxononanoate synthase (bioF) from Methanocaldococcus jannaschii (strain ATCC 43067 / DSM 2661 / JAL-1 / JCM 10045 / NBRC 100440) (Methanococcus jannaschii).